The primary structure comprises 152 residues: Protein-export protein SecB (152 aa).

It belongs to the SecB family. Homotetramer, a dimer of dimers. One homotetramer interacts with 1 SecA dimer.

The protein resides in the cytoplasm. One of the proteins required for the normal export of preproteins out of the cell cytoplasm. It is a molecular chaperone that binds to a subset of precursor proteins, maintaining them in a translocation-competent state. It also specifically binds to its receptor SecA. The polypeptide is Protein-export protein SecB (Rickettsia felis (strain ATCC VR-1525 / URRWXCal2) (Rickettsia azadi)).